The following is a 204-amino-acid chain: Thiamine-phosphate synthase (204 aa).

4-amino-2-methyl-5-(diphosphooxymethyl)pyrimidine-binding positions include Q28–K32 and N60. Mg(2+) contacts are provided by D61 and D80. Positions 99 and 128 each coordinate 4-amino-2-methyl-5-(diphosphooxymethyl)pyrimidine. 2-[(2R,5Z)-2-carboxy-4-methylthiazol-5(2H)-ylidene]ethyl phosphate-binding positions include G157 and V177–T178.

The protein belongs to the thiamine-phosphate synthase family. Requires Mg(2+) as cofactor.

The enzyme catalyses 2-[(2R,5Z)-2-carboxy-4-methylthiazol-5(2H)-ylidene]ethyl phosphate + 4-amino-2-methyl-5-(diphosphooxymethyl)pyrimidine + 2 H(+) = thiamine phosphate + CO2 + diphosphate. It catalyses the reaction 2-(2-carboxy-4-methylthiazol-5-yl)ethyl phosphate + 4-amino-2-methyl-5-(diphosphooxymethyl)pyrimidine + 2 H(+) = thiamine phosphate + CO2 + diphosphate. The catalysed reaction is 4-methyl-5-(2-phosphooxyethyl)-thiazole + 4-amino-2-methyl-5-(diphosphooxymethyl)pyrimidine + H(+) = thiamine phosphate + diphosphate. It functions in the pathway cofactor biosynthesis; thiamine diphosphate biosynthesis; thiamine phosphate from 4-amino-2-methyl-5-diphosphomethylpyrimidine and 4-methyl-5-(2-phosphoethyl)-thiazole: step 1/1. Functionally, condenses 4-methyl-5-(beta-hydroxyethyl)thiazole monophosphate (THZ-P) and 2-methyl-4-amino-5-hydroxymethyl pyrimidine pyrophosphate (HMP-PP) to form thiamine monophosphate (TMP). This is Thiamine-phosphate synthase from Rhizobium etli (strain ATCC 51251 / DSM 11541 / JCM 21823 / NBRC 15573 / CFN 42).